A 448-amino-acid chain; its full sequence is MLRAVSTSFGTARAASAVAKKNMPNIVLVDAVRTPFVVSGTVFKDLMAVDLQKEAIKALVEKTKLPYEQLDHIICGTVIQECKTSNIAREAALLAGVPDKIPAHTVTLACISSNVAMTTGMGMLATGNANAIIAGGVELLSDVPIRYNRNARKAMLGMNKAKDVPSKLKIGGQIVKNLLSPELPAVAEFSTGETMGHSGDRLAAAFNVSRREQDEFAIRSHTLASEAAKNGKFTDVVPVFLDGKKPKTIKEDNGIRVSTLEKLSSLKPAFVKPHGTVTAANASYLTDGASAALIMTEEYALANGYKPKAYLRDYLYVAQDPKDQLLLSPAYVIPKLLDKAGLTLKDVDVFEIHEAFAGQVLANLNAMDSDYFCKEQMKRSGKFGRVPMDKLNLWGGSLSIGHPFGATGVRLATHSAHRLKEEKGQYAVIAACAAGGHGVGMLIEAYGK.

Cys-110 acts as the Acyl-thioester intermediate in catalysis. Active-site proton acceptor residues include His-402 and Cys-432.

This sequence belongs to the thiolase-like superfamily. Thiolase family.

The protein resides in the mitochondrion. The enzyme catalyses an acyl-CoA + acetyl-CoA = a 3-oxoacyl-CoA + CoA. The protein operates within lipid metabolism; fatty acid beta-oxidation. Functionally, mitochondrial enzyme that catalyzes reactions of the mitochondrial beta-oxidation pathway. This chain is Probable 3-ketoacyl-CoA thiolase, found in Caenorhabditis elegans.